A 273-amino-acid chain; its full sequence is Large ribosomal subunit protein uL2 (273 aa).

Residues Val228–Lys273 are disordered. Positions Lys254 to Lys273 are enriched in basic residues.

Belongs to the universal ribosomal protein uL2 family. Part of the 50S ribosomal subunit. Forms a bridge to the 30S subunit in the 70S ribosome.

In terms of biological role, one of the primary rRNA binding proteins. Required for association of the 30S and 50S subunits to form the 70S ribosome, for tRNA binding and peptide bond formation. It has been suggested to have peptidyltransferase activity; this is somewhat controversial. Makes several contacts with the 16S rRNA in the 70S ribosome. This Rickettsia felis (strain ATCC VR-1525 / URRWXCal2) (Rickettsia azadi) protein is Large ribosomal subunit protein uL2.